Reading from the N-terminus, the 306-residue chain is tRNA pseudouridine synthase B (306 aa).

The Nucleophile role is filled by Asp47.

Belongs to the pseudouridine synthase TruB family. Type 1 subfamily.

The catalysed reaction is uridine(55) in tRNA = pseudouridine(55) in tRNA. Its function is as follows. Responsible for synthesis of pseudouridine from uracil-55 in the psi GC loop of transfer RNAs. The sequence is that of tRNA pseudouridine synthase B from Neisseria gonorrhoeae (strain NCCP11945).